Here is a 964-residue protein sequence, read N- to C-terminus: Vitamin B12-dependent ribonucleotide reductase (964 aa).

The disordered stretch occupies residues 1 to 21 (MTETASGPARGSRAKGTKAKG). A compositionally biased stretch (basic residues) spans 12–21 (SRAKGTKAKG). Substrate is bound by residues Ser142, 158–159 (AC), Gly187, 363–367 (NPCSE), and 553–557 (PTGTI). An intrachain disulfide couples Cys159 to Cys376. The Proton acceptor role is filled by Asn363. Cys365 serves as the catalytic Cysteine radical intermediate. Catalysis depends on Glu367, which acts as the Proton acceptor.

Belongs to the ribonucleoside diphosphate reductase class-2 family. Adenosylcob(III)alamin serves as cofactor.

The catalysed reaction is a 2'-deoxyribonucleoside 5'-diphosphate + [thioredoxin]-disulfide + H2O = a ribonucleoside 5'-diphosphate + [thioredoxin]-dithiol. Its function is as follows. Catalyzes the reduction of ribonucleotides to deoxyribonucleotides. May function to provide a pool of deoxyribonucleotide precursors for DNA repair during oxygen limitation and/or for immediate growth after restoration of oxygen. This Streptomyces avermitilis (strain ATCC 31267 / DSM 46492 / JCM 5070 / NBRC 14893 / NCIMB 12804 / NRRL 8165 / MA-4680) protein is Vitamin B12-dependent ribonucleotide reductase (nrdJ).